Consider the following 97-residue polypeptide: MESSTSSSGSALGAVDPQLQHFIEVETQKQRFQQLVHQMTELCWEKCMDKPGPKLDSRAEACFVNCVERFIDTSQFILNRLEQTQKSKPVFSESLSD.

A Twin CX3C motif motif is present at residues 43–66 (CWEKCMDKPGPKLDSRAEACFVNC). 2 cysteine pairs are disulfide-bonded: cysteine 43-cysteine 66 and cysteine 47-cysteine 62. Phosphoserine occurs at positions 57, 87, 94, and 96.

It belongs to the small Tim family. As to quaternary structure, heterohexamer; composed of 3 copies of TIMM8A and 3 copies of TIMM13, named soluble 70 kDa complex. Associates with the TIM22 complex, whose core is composed of TIMM22. In terms of tissue distribution, present at high level in liver and brain, and at lower level in muscle and heart. In CNS sections, it is predominantly present in the soma and the dendritic portion of the Purkinje cells of the cerebellum, but not in the glial cells. Scattered expression also is also detected in the brain stem, olfactory bulb, substantia nigra, hippocampus and striatum (at protein level). Ubiquitously expressed.

The protein resides in the mitochondrion inner membrane. Mitochondrial intermembrane chaperone that participates in the import and insertion of some multi-pass transmembrane proteins into the mitochondrial inner membrane. Also required for the transfer of beta-barrel precursors from the TOM complex to the sorting and assembly machinery (SAM complex) of the outer membrane. Acts as a chaperone-like protein that protects the hydrophobic precursors from aggregation and guide them through the mitochondrial intermembrane space. The TIMM8-TIMM13 complex mediates the import of proteins such as TIMM23, SLC25A12/ARALAR1 and SLC25A13/ARALAR2, while the predominant TIMM9-TIMM10 70 kDa complex mediates the import of much more proteins. This chain is Mitochondrial import inner membrane translocase subunit Tim8 A (Timm8a1), found in Mus musculus (Mouse).